Reading from the N-terminus, the 450-residue chain is tRNA modification GTPase MnmE (450 aa).

3 residues coordinate (6S)-5-formyl-5,6,7,8-tetrahydrofolate: Arg20, Glu78, and Lys117. The 162-residue stretch at 211–372 folds into the TrmE-type G domain; that stretch reads GLRMVIVGKP…LEESIYRETQ (162 aa). Asn221 serves as a coordination point for K(+). GTP-binding positions include 221–226, 240–246, 265–268, 326–329, and 353–355; these read NVGKST, TDIPGTT, DTAG, NKVD, and SAL. Residue Ser225 participates in Mg(2+) binding. K(+) is bound by residues Thr240, Ile242, and Thr245. Position 246 (Thr246) interacts with Mg(2+). A (6S)-5-formyl-5,6,7,8-tetrahydrofolate-binding site is contributed by Lys450.

It belongs to the TRAFAC class TrmE-Era-EngA-EngB-Septin-like GTPase superfamily. TrmE GTPase family. Homodimer. Heterotetramer of two MnmE and two MnmG subunits. Requires K(+) as cofactor.

The protein resides in the cytoplasm. Exhibits a very high intrinsic GTPase hydrolysis rate. Involved in the addition of a carboxymethylaminomethyl (cmnm) group at the wobble position (U34) of certain tRNAs, forming tRNA-cmnm(5)s(2)U34. This chain is tRNA modification GTPase MnmE, found in Thermotoga maritima (strain ATCC 43589 / DSM 3109 / JCM 10099 / NBRC 100826 / MSB8).